We begin with the raw amino-acid sequence, 416 residues long: MKIYLVGGAVRDSLLNLPIKDKDFMVVGATPEQMQQLGYRQVGKDFPVFLHPKTQQEYALARTERKVGLGYGGFSCYASPDVTLEQDLLRRDLTINAIAQDEAGNLHDPFHGIADIEARQLRHVSAAFSEDPLRVLRVARFAARFHGLGFEIAPETMALMQHMSQTEELTALTPERVWQEVDKSLGGPHPEVFFEVLRQCGALKVLFPEIDALFGVPQPEKWHPEIDTGLHTMMVLAQSSSMTEEKAVRFAALVHDLGKALSPKEHWPKHHGHGQKGLPVIKSLCERLRVPNEYRDLALLVSDQHQNVHQAFELRSETIIKLFDKADFWRKPERLKQLLLACIADMRGRTGFEHQPYPQSDYLNACFLAANNVDVKAIIAAGFQGAQIKQALNSKRIEVVEQVKLNWQQSQAKQTP.

ATP contacts are provided by Gly-8 and Arg-11. Positions 8 and 11 each coordinate CTP. Asp-21 and Asp-23 together coordinate Mg(2+). Residues Arg-91, Arg-137, and Arg-140 each contribute to the ATP site. Arg-91, Arg-137, and Arg-140 together coordinate CTP. Residues 228–329 enclose the HD domain; it reads TGLHTMMVLA…IKLFDKADFW (102 aa).

This sequence belongs to the tRNA nucleotidyltransferase/poly(A) polymerase family. Bacterial CCA-adding enzyme type 1 subfamily. In terms of assembly, monomer. Can also form homodimers and oligomers. Mg(2+) serves as cofactor. The cofactor is Ni(2+).

It carries out the reaction a tRNA precursor + 2 CTP + ATP = a tRNA with a 3' CCA end + 3 diphosphate. The enzyme catalyses a tRNA with a 3' CCA end + 2 CTP + ATP = a tRNA with a 3' CCACCA end + 3 diphosphate. Catalyzes the addition and repair of the essential 3'-terminal CCA sequence in tRNAs without using a nucleic acid template. Adds these three nucleotides in the order of C, C, and A to the tRNA nucleotide-73, using CTP and ATP as substrates and producing inorganic pyrophosphate. tRNA 3'-terminal CCA addition is required both for tRNA processing and repair. Also involved in tRNA surveillance by mediating tandem CCA addition to generate a CCACCA at the 3' terminus of unstable tRNAs. While stable tRNAs receive only 3'-terminal CCA, unstable tRNAs are marked with CCACCA and rapidly degraded. The protein is Multifunctional CCA protein of Shewanella sp. (strain MR-7).